We begin with the raw amino-acid sequence, 1125 residues long: Kinase and exchange factor for Rac B (1125 aa).

Disordered stretches follow at residues 50-175 (VTGG…ASIN), 247-287 (SVPG…GGKF), and 322-362 (KTRD…VNSD). Over residues 59-91 (NNQQQQQNNNNNNNNNNNNNNNNNNNNNNNNNN) the composition is skewed to low complexity. The span at 92–106 (SGEISSNNSTPSILF) shows a compositional bias: polar residues. The segment covering 113–124 (TAPPAPPQPTTP) has biased composition (pro residues). Residues 137-161 (NINQQPIGGVNNNNNNNNKDSPSNK) are compositionally biased toward low complexity. The DH domain maps to 380–571 (KRRQVSLQIL…KSTVDYVKEK (192 aa)). In terms of domain architecture, PH spans 601-822 (RYVREGMLTE…WIQAIHANII (222 aa)). Disordered stretches follow at residues 693–729 (INNMTNNDSKSKNNNNNNSNGNNNNNNINSNSNSNNN) and 761–791 (SNNNNNNNINSNNNINGNNNNGNNSVNYSNG). The segment covering 694–729 (NNMTNNDSKSKNNNNNNSNGNNNNNNINSNSNSNNN) has biased composition (low complexity). One can recognise a Protein kinase domain in the interval 848-1117 (IKLCEQIGSG…QLVQKLTKML (270 aa)). ATP-binding positions include 854-862 (IGSGGSGCT) and Lys-876. The Proton acceptor role is filled by Asp-971.

It belongs to the protein kinase superfamily. STE Ser/Thr protein kinase family. Requires Mg(2+) as cofactor.

It carries out the reaction L-seryl-[protein] + ATP = O-phospho-L-seryl-[protein] + ADP + H(+). The enzyme catalyses L-threonyl-[protein] + ATP = O-phospho-L-threonyl-[protein] + ADP + H(+). This chain is Kinase and exchange factor for Rac B, found in Dictyostelium discoideum (Social amoeba).